The sequence spans 512 residues: Inosine-5'-monophosphate dehydrogenase (512 aa).

2 consecutive CBS domains span residues 110 to 169 (FIMK…SAPV) and 173 to 231 (MTRR…PNSS). Residues 268–270 (DSS) and 318–320 (GMG) each bind NAD(+). Glycine 320 and glycine 322 together coordinate K(+). Serine 323 is a binding site for IMP. Cysteine 325 lines the K(+) pocket. The active-site Thioimidate intermediate is the cysteine 325. IMP is bound by residues 358–360 (DGG), 381–382 (GS), and 405–409 (YRGMG). The active-site Proton acceptor is arginine 423. Glutamine 435 serves as a coordination point for IMP. Positions 494 and 495 each coordinate K(+). The Microbody targeting signal motif lies at 510-512 (SKL).

This sequence belongs to the IMPDH/GMPR family. As to quaternary structure, homotetramer. K(+) is required as a cofactor.

It localises to the glycosome. The catalysed reaction is IMP + NAD(+) + H2O = XMP + NADH + H(+). It participates in purine metabolism; XMP biosynthesis via de novo pathway; XMP from IMP: step 1/1. Mycophenolic acid (MPA) is a non-competitive inhibitor that prevents formation of the closed enzyme conformation by binding to the same site as the amobile flap. In contrast, mizoribine monophosphate (MZP) is a competitive inhibitor that induces the closed conformation. MPA is a potent inhibitor of mammalian IMPDHs but a poor inhibitor of the bacterial enzymes. MZP is a more potent inhibitor of bacterial IMPDH. In terms of biological role, catalyzes the conversion of inosine 5'-phosphate (IMP) to xanthosine 5'-phosphate (XMP), the first committed and rate-limiting step in the de novo synthesis of guanine nucleotides, and therefore plays an important role in the regulation of cell growth. In Trypanosoma brucei brucei, this protein is Inosine-5'-monophosphate dehydrogenase.